The primary structure comprises 108 residues: Tubulin-specific chaperone A (108 aa).

A2 is modified (N-acetylalanine).

Belongs to the TBCA family. In terms of assembly, supercomplex made of cofactors A to E. Cofactors A and D function by capturing and stabilizing tubulin in a quasi-native conformation. Cofactor E binds to the cofactor D-tubulin complex; interaction with cofactor C then causes the release of tubulin polypeptides that are committed to the native state.

Its subcellular location is the cytoplasm. The protein resides in the cytoskeleton. Functionally, tubulin-folding protein; involved in the early step of the tubulin folding pathway. This chain is Tubulin-specific chaperone A (TBCA), found in Oryctolagus cuniculus (Rabbit).